Reading from the N-terminus, the 368-residue chain is Glutaminyl-peptide cyclotransferase (368 aa).

The N-terminal stretch at 1–23 (MARERRDSKAATFFCLAWALCLA) is a signal peptide. N-linked (GlcNAc...) asparagine glycosylation is found at asparagine 53 and asparagine 65. A disulfide bond links cysteine 143 and cysteine 169. Aspartate 164 is a Zn(2+) binding site. Residue glutamate 207 is the Proton acceptor of the active site. Residue glutamate 208 coordinates Zn(2+). The active-site Proton acceptor is the aspartate 254. Asparagine 292 carries N-linked (GlcNAc...) asparagine glycosylation. Histidine 336 is a binding site for Zn(2+). N-linked (GlcNAc...) asparagine glycosylation is present at asparagine 352.

The protein belongs to the glutaminyl-peptide cyclotransferase family. In terms of tissue distribution, expressed by the venom gland.

It is found in the secreted. The enzyme catalyses N-terminal L-glutaminyl-[peptide] = N-terminal 5-oxo-L-prolyl-[peptide] + NH4(+). Its function is as follows. Responsible for the biosynthesis of pyroglutamyl peptides. Has a bias against acidic and tryptophan residues adjacent to the N-terminal glutaminyl residue and a lack of importance of chain length after the second residue. Also catalyzes N-terminal pyroglutamate formation. This Bothrops jararaca (Jararaca) protein is Glutaminyl-peptide cyclotransferase (QPCT).